A 687-amino-acid chain; its full sequence is Chloride channel protein ClC-Ka (687 aa).

4 helical membrane passes run 52-72 (FLMT…FALG), 161-181 (LFLG…AYLG), 202-222 (VAGA…GVLF), and 236-256 (YWRG…LAVF). Residues Glu-259, Glu-261, Asp-278, and Glu-281 each contribute to the Ca(2+) site. Transmembrane regions (helical) follow at residues 282–302 (IFFF…YLYC), 325–345 (PLYA…PGVG), 396–416 (FTIF…LILA), 417–437 (TTIP…AAIG), 452–472 (IVAG…AGAA), and 486–506 (LLAF…MAVL). The Cytoplasmic segment spans residues 507–687 (AANAIAQSCQ…SALTNPPPAK (181 aa)). 2 consecutive CBS domains span residues 551 to 612 (MRRA…ARAS) and 628 to 686 (TEPV…PPPA).

This sequence belongs to the chloride channel (TC 2.A.49) family. CLCNKA subfamily. As to quaternary structure, homodimer. Interacts with BSND. As to expression, expressed predominantly in the kidney.

Its subcellular location is the basolateral cell membrane. The enzyme catalyses chloride(in) = chloride(out). It carries out the reaction bromide(in) = bromide(out). The catalysed reaction is nitrate(in) = nitrate(out). It catalyses the reaction iodide(out) = iodide(in). Anion-selective channel permeable to small monovalent anions with ion selectivity for chloride &gt; bromide &gt; nitrate &gt; iodide. Forms a homodimeric channel where each subunit has its own ion conduction pathway. May conduct double-barreled currents controlled by two types of gates, two fast gates that control each subunit independently and a slow common gate that opens and shuts off both subunits simultaneously. Assembles with the regulatory subunit BSND/Barttin for sorting at the basolateral plasma membrane domain and functional switch to the ion conducting state. CLCNKA:BSND channels display mostly a linear current-voltage relationship with fast gating at negative potentials. Mediates transepithelial chloride transport from the lumen to interstitial compartment along the thin ascending limb of Henle's loop, contributing to generation of hypertonic medullary interstitium as a countercurrent system to achieve urine concentration. Conducts chloride currents in the stria vascularis of the inner ear to establish the endocochlear potential necessary for normal hearing. The chain is Chloride channel protein ClC-Ka (CLCNKA) from Oryctolagus cuniculus (Rabbit).